The following is a 441-amino-acid chain: Glutamate-1-semialdehyde 2,1-aminomutase (441 aa).

The residue at position 276 (K276) is an N6-(pyridoxal phosphate)lysine.

The protein belongs to the class-III pyridoxal-phosphate-dependent aminotransferase family. HemL subfamily. In terms of assembly, homodimer. The cofactor is pyridoxal 5'-phosphate.

Its subcellular location is the cytoplasm. The catalysed reaction is (S)-4-amino-5-oxopentanoate = 5-aminolevulinate. It participates in porphyrin-containing compound metabolism; protoporphyrin-IX biosynthesis; 5-aminolevulinate from L-glutamyl-tRNA(Glu): step 2/2. This Rhodococcus jostii (strain RHA1) protein is Glutamate-1-semialdehyde 2,1-aminomutase.